The sequence spans 192 residues: Glycerol-3-phosphate acyltransferase (192 aa).

5 helical membrane-spanning segments follow: residues V5–I25, F50–A70, D78–L98, I112–F132, and S153–L173.

The protein belongs to the PlsY family. As to quaternary structure, probably interacts with PlsX.

It is found in the cell membrane. The enzyme catalyses an acyl phosphate + sn-glycerol 3-phosphate = a 1-acyl-sn-glycero-3-phosphate + phosphate. It participates in lipid metabolism; phospholipid metabolism. In terms of biological role, catalyzes the transfer of an acyl group from acyl-phosphate (acyl-PO(4)) to glycerol-3-phosphate (G3P) to form lysophosphatidic acid (LPA). This enzyme utilizes acyl-phosphate as fatty acyl donor, but not acyl-CoA or acyl-ACP. This Wolbachia pipientis wMel protein is Glycerol-3-phosphate acyltransferase.